We begin with the raw amino-acid sequence, 117 residues long: S-adenosylmethionine decarboxylase proenzyme (117 aa).

Catalysis depends on Ser-63, which acts as the Schiff-base intermediate with substrate; via pyruvic acid. Ser-63 carries the pyruvic acid (Ser); by autocatalysis modification. His-68 serves as the catalytic Proton acceptor; for processing activity. Catalysis depends on Cys-83, which acts as the Proton donor; for catalytic activity.

The protein belongs to the prokaryotic AdoMetDC family. Type 1 subfamily. Heterotetramer of two alpha and two beta chains arranged as a dimer of alpha/beta heterodimers. The cofactor is pyruvate. In terms of processing, is synthesized initially as an inactive proenzyme. Formation of the active enzyme involves a self-maturation process in which the active site pyruvoyl group is generated from an internal serine residue via an autocatalytic post-translational modification. Two non-identical subunits are generated from the proenzyme in this reaction, and the pyruvate is formed at the N-terminus of the alpha chain, which is derived from the carboxyl end of the proenzyme. The post-translation cleavage follows an unusual pathway, termed non-hydrolytic serinolysis, in which the side chain hydroxyl group of the serine supplies its oxygen atom to form the C-terminus of the beta chain, while the remainder of the serine residue undergoes an oxidative deamination to produce ammonia and the pyruvoyl group blocking the N-terminus of the alpha chain.

The catalysed reaction is S-adenosyl-L-methionine + H(+) = S-adenosyl 3-(methylsulfanyl)propylamine + CO2. The protein operates within amine and polyamine biosynthesis; S-adenosylmethioninamine biosynthesis; S-adenosylmethioninamine from S-adenosyl-L-methionine: step 1/1. In terms of biological role, catalyzes the decarboxylation of S-adenosylmethionine to S-adenosylmethioninamine (dcAdoMet), the propylamine donor required for the synthesis of the polyamines spermine and spermidine from the diamine putrescine. In Methanococcus aeolicus (strain ATCC BAA-1280 / DSM 17508 / OCM 812 / Nankai-3), this protein is S-adenosylmethionine decarboxylase proenzyme.